Reading from the N-terminus, the 295-residue chain is Malonyl-[acyl-carrier protein] O-methyltransferase (295 aa).

Belongs to the methyltransferase superfamily.

The enzyme catalyses malonyl-[ACP] + S-adenosyl-L-methionine = malonyl-[ACP] methyl ester + S-adenosyl-L-homocysteine. The protein operates within cofactor biosynthesis; biotin biosynthesis. Converts the free carboxyl group of a malonyl-thioester to its methyl ester by transfer of a methyl group from S-adenosyl-L-methionine (SAM). It allows to synthesize pimeloyl-ACP via the fatty acid synthetic pathway. This is Malonyl-[acyl-carrier protein] O-methyltransferase from Xylella fastidiosa (strain M23).